A 188-amino-acid polypeptide reads, in one-letter code: Elongation factor P (188 aa).

Lys34 bears the N6-(3,6-diaminohexanoyl)-5-hydroxylysine mark.

The protein belongs to the elongation factor P family. May be beta-lysylated on the epsilon-amino group of Lys-34 by the combined action of EpmA and EpmB, and then hydroxylated on the C5 position of the same residue by EpmC (if this protein is present). Lysylation is critical for the stimulatory effect of EF-P on peptide-bond formation. The lysylation moiety may extend toward the peptidyltransferase center and stabilize the terminal 3-CCA end of the tRNA. Hydroxylation of the C5 position on Lys-34 may allow additional potential stabilizing hydrogen-bond interactions with the P-tRNA.

The protein localises to the cytoplasm. It participates in protein biosynthesis; polypeptide chain elongation. Functionally, involved in peptide bond synthesis. Alleviates ribosome stalling that occurs when 3 or more consecutive Pro residues or the sequence PPG is present in a protein, possibly by augmenting the peptidyl transferase activity of the ribosome. Modification of Lys-34 is required for alleviation. The protein is Elongation factor P of Stenotrophomonas maltophilia (strain R551-3).